The primary structure comprises 147 residues: uncharacterized protein (147 aa).

This is an uncharacterized protein from Mycoplasma genitalium (strain ATCC 33530 / DSM 19775 / NCTC 10195 / G37) (Mycoplasmoides genitalium).